The primary structure comprises 526 residues: Glutamate--tRNA ligase, mitochondrial (526 aa).

The N-terminal 38 residues, 1–38, are a transit peptide targeting the mitochondrion; that stretch reads MLSYTSCAKLICSRYIVSKISFYSLKRCNSTAVVRTRF. 37–39 lines the L-glutamate pocket; that stretch reads RFA. The 'HIGH' region signature appears at 42–50; the sequence is PTGFLHLGS. His47 lines the ATP pocket. L-glutamate-binding positions include Glu73, 222–226, and Arg240; that span reads YHFAN. Residues Glu243 and 278–282 each bind ATP; that span reads KLSKR. The short motif at 278 to 282 is the 'KMSKS' region element; sequence KLSKR.

This sequence belongs to the class-I aminoacyl-tRNA synthetase family. Glutamate--tRNA ligase type 1 subfamily.

The protein resides in the mitochondrion. It carries out the reaction tRNA(Glu) + L-glutamate + ATP = L-glutamyl-tRNA(Glu) + AMP + diphosphate. In terms of biological role, catalyzes the attachment of glutamate to tRNA(Glu) in a two-step reaction: glutamate is first activated by ATP to form Glu-AMP and then transferred to the acceptor end of tRNA(Glu). In Schizosaccharomyces pombe (strain 972 / ATCC 24843) (Fission yeast), this protein is Glutamate--tRNA ligase, mitochondrial (mse1).